We begin with the raw amino-acid sequence, 234 residues long: 2,3-bisphosphoglycerate-dependent phosphoglycerate mutase (234 aa).

Residues 8-15 (RHGESVWN), 21-22 (TG), Arg-60, 87-90 (ERHY), Lys-98, 114-115 (RR), and 183-184 (GN) each bind substrate. Residue His-9 is the Tele-phosphohistidine intermediate of the active site. The active-site Proton donor/acceptor is Glu-87.

This sequence belongs to the phosphoglycerate mutase family. BPG-dependent PGAM subfamily. As to quaternary structure, homodimer.

It catalyses the reaction (2R)-2-phosphoglycerate = (2R)-3-phosphoglycerate. It functions in the pathway carbohydrate degradation; glycolysis; pyruvate from D-glyceraldehyde 3-phosphate: step 3/5. In terms of biological role, catalyzes the interconversion of 2-phosphoglycerate and 3-phosphoglycerate. The chain is 2,3-bisphosphoglycerate-dependent phosphoglycerate mutase from Geobacter sp. (strain M21).